Consider the following 163-residue polypeptide: Retinoic acid receptor responder protein 2 (163 aa).

The first 20 residues, 1–20 (MRRLLIPLALWLGAVGVGVA), serve as a signal peptide directing secretion. Disulfide bonds link Cys-77–Cys-87, Cys-98–Cys-117, and Cys-101–Cys-135. A propeptide spanning residues 158–163 (KALPRS) is cleaved from the precursor.

Secreted in an inactive precursor form, prochemerin, which is proteolytically processed by a variety of extracellular proteases to generate forms with differing levels of bioactivity. For example, the removal of six amino acids results in chemerin-157, which exhibits the highest activity, while removal of seven amino acids results in chemerin-156 which has slightly less activity. Some proteases are able to cleave at more than one site and chemerin forms may be sequentially processed by different enzymes to modulate activity levels. The coordinated expression and activity of chemerin-modifying enzymes is essential for regulating its bioactivation, inactivation and, consequently, biological function. Cathepsin G cleaves seven C-terminal amino acids from prochemerin (chemerin-156), elastase is able to cleave six (chemerin-157), eight (chemerin-155) or eleven (chemerin-152), plasmin cleaves five amino acids (chemerin-158), and tryptase cleaves five (chemerin-158) or eight (chemerin-155). Multiple cleavages might be required to fully activate chemerin, with an initial tryptase cleavage resulting in chemerin with low activity (chemerin-158), and a second cleavage by carboxypeptidase N or B producing highly active chemerin (chemerin-157).

It is found in the secreted. Adipocyte-secreted protein (adipokine) that regulates adipogenesis, metabolism and inflammation through activation of the chemokine-like receptor 1 (CMKLR1). Also acts as a ligand for CMKLR2. Can also bind to C-C chemokine receptor-like 2 (CCRL2), but with a lower affinity than it does to CMKLR1 or CMKLR2. Positively regulates adipocyte differentiation, modulates the expression of adipocyte genes involved in lipid and glucose metabolism and might play a role in angiogenesis, a process essential for the expansion of white adipose tissue. Also acts as a pro-inflammatory adipokine, causing an increase in secretion of pro-inflammatory and prodiabetic adipokines, which further impair adipose tissue metabolic function and have negative systemic effects including impaired insulin sensitivity, altered glucose and lipid metabolism, and a decrease in vascular function in other tissues. Can have both pro- and anti-inflammatory properties depending on the modality of enzymatic cleavage by different classes of proteases. Acts as a chemotactic factor for leukocyte populations expressing CMKLR1, particularly immature plasmacytoid dendritic cells, but also immature myeloid DCs, macrophages and natural killer cells. Exerts an anti-inflammatory role by preventing TNF/TNFA-induced VCAM1 expression and monocytes adhesion in vascular endothelial cells. The effect is mediated via inhibiting activation of NF-kappa-B and CRK/p38 through stimulation of AKT1/NOS3 signaling and nitric oxide production. Exhibits an antimicrobial function in the skin. The chain is Retinoic acid receptor responder protein 2 (RARRES2) from Pongo abelii (Sumatran orangutan).